Consider the following 199-residue polypeptide: Recombination protein RecR (199 aa).

A C4-type zinc finger spans residues 57–72 (CEKCNNFTEEVVCELC). Positions 80 to 175 (ALLCVVEMPA…KITRIARGLP (96 aa)) constitute a Toprim domain.

Belongs to the RecR family.

In terms of biological role, may play a role in DNA repair. It seems to be involved in an RecBC-independent recombinational process of DNA repair. It may act with RecF and RecO. The sequence is that of Recombination protein RecR from Nitrosospira multiformis (strain ATCC 25196 / NCIMB 11849 / C 71).